Here is a 324-residue protein sequence, read N- to C-terminus: D-alanine--D-alanine ligase (324 aa).

The ATP-grasp domain maps to Asn121–Glu321. ATP is bound at residue Val149 to Thr204. Residues Asp275, Glu288, and Asn290 each contribute to the Mg(2+) site.

The protein belongs to the D-alanine--D-alanine ligase family. It depends on Mg(2+) as a cofactor. Mn(2+) is required as a cofactor.

It localises to the cytoplasm. It carries out the reaction 2 D-alanine + ATP = D-alanyl-D-alanine + ADP + phosphate + H(+). The protein operates within cell wall biogenesis; peptidoglycan biosynthesis. Cell wall formation. The chain is D-alanine--D-alanine ligase from Bacteroides fragilis (strain YCH46).